We begin with the raw amino-acid sequence, 212 residues long: ATP phosphoribosyltransferase (212 aa).

The protein belongs to the ATP phosphoribosyltransferase family. Short subfamily. In terms of assembly, heteromultimer composed of HisG and HisZ subunits.

It localises to the cytoplasm. It catalyses the reaction 1-(5-phospho-beta-D-ribosyl)-ATP + diphosphate = 5-phospho-alpha-D-ribose 1-diphosphate + ATP. Its pathway is amino-acid biosynthesis; L-histidine biosynthesis; L-histidine from 5-phospho-alpha-D-ribose 1-diphosphate: step 1/9. Functionally, catalyzes the condensation of ATP and 5-phosphoribose 1-diphosphate to form N'-(5'-phosphoribosyl)-ATP (PR-ATP). Has a crucial role in the pathway because the rate of histidine biosynthesis seems to be controlled primarily by regulation of HisG enzymatic activity. The chain is ATP phosphoribosyltransferase from Albidiferax ferrireducens (strain ATCC BAA-621 / DSM 15236 / T118) (Rhodoferax ferrireducens).